Reading from the N-terminus, the 74-residue chain is Tau-AnmTx Ueq 12-1 (74 aa).

The N-terminal stretch at 1 to 18 (MCLLMLVLGAMYVQGWHS) is a signal peptide. The propeptide at 19-27 (AGFGKRTLK) is removed in mature form. 5 disulfides stabilise this stretch: cysteine 30–cysteine 37, cysteine 40–cysteine 71, cysteine 46–cysteine 64, cysteine 51–cysteine 72, and cysteine 58–cysteine 73.

The protein belongs to the Cnidaria small cysteine-rich protein (SCRiP) family. Detected in mucus secreted from ectoderm.

The protein resides in the secreted. In terms of biological role, potentiates activation of mammalian TRPA1, a non-selective cation channel involved in perception of pain, in vitro yet has an analgesic and anti-inflammatory effect in vivo. Has antibacterial activity against C.glutamicum (MIC=50 uM) and, to a lesser extent, against S.aureus but not against P.aeruginosa or E.coli. This chain is Tau-AnmTx Ueq 12-1, found in Urticina eques (Sea anemone).